We begin with the raw amino-acid sequence, 344 residues long: 3-dehydroquinate synthase (344 aa).

NAD(+) contacts are provided by residues 60-65 (DGEEYK), 94-98 (GVISD), 118-119 (TT), Lys131, Lys140, and 158-161 (FLNT). Residues Glu173, His232, and His249 each coordinate Zn(2+).

This sequence belongs to the sugar phosphate cyclases superfamily. Dehydroquinate synthase family. It depends on Co(2+) as a cofactor. Zn(2+) is required as a cofactor. The cofactor is NAD(+).

It is found in the cytoplasm. The catalysed reaction is 7-phospho-2-dehydro-3-deoxy-D-arabino-heptonate = 3-dehydroquinate + phosphate. It functions in the pathway metabolic intermediate biosynthesis; chorismate biosynthesis; chorismate from D-erythrose 4-phosphate and phosphoenolpyruvate: step 2/7. Catalyzes the conversion of 3-deoxy-D-arabino-heptulosonate 7-phosphate (DAHP) to dehydroquinate (DHQ). The chain is 3-dehydroquinate synthase from Campylobacter hominis (strain ATCC BAA-381 / DSM 21671 / CCUG 45161 / LMG 19568 / NCTC 13146 / CH001A).